The primary structure comprises 695 residues: Biosynthetic arginine decarboxylase 1 (695 aa).

Residue K141 is modified to N6-(pyridoxal phosphate)lysine. 332 to 342 provides a ligand contact to substrate; the sequence is LDVGGGLGVDY.

It belongs to the Orn/Lys/Arg decarboxylase class-II family. SpeA subfamily. It depends on Mg(2+) as a cofactor. Pyridoxal 5'-phosphate is required as a cofactor.

The catalysed reaction is L-arginine + H(+) = agmatine + CO2. In terms of biological role, catalyzes the biosynthesis of agmatine from arginine. The protein is Biosynthetic arginine decarboxylase 1 (speA1) of Synechocystis sp. (strain ATCC 27184 / PCC 6803 / Kazusa).